Consider the following 264-residue polypeptide: Phosphate import ATP-binding protein PstB 1 (264 aa).

The ABC transporter domain maps to 20-259 (LETRDLNIFY…PKIKLTEDYI (240 aa)). 52 to 59 (GASGSGKS) contacts ATP.

It belongs to the ABC transporter superfamily. Phosphate importer (TC 3.A.1.7) family. The complex is composed of two ATP-binding proteins (PstB), two transmembrane proteins (PstC and PstA) and a solute-binding protein (PstS).

It is found in the cell membrane. It catalyses the reaction phosphate(out) + ATP + H2O = ADP + 2 phosphate(in) + H(+). Functionally, part of the ABC transporter complex PstSACB involved in phosphate import. Responsible for energy coupling to the transport system. The sequence is that of Phosphate import ATP-binding protein PstB 1 from Ligilactobacillus salivarius (strain UCC118) (Lactobacillus salivarius).